Reading from the N-terminus, the 169-residue chain is dCTP pyrophosphatase 1 (169 aa).

Positions 1-26 (MSASEEMLGGARGESTTATGPFSFSS) are disordered. Over residues 14–26 (ESTTATGPFSFSS) the composition is skewed to polar residues. Substrate is bound by residues His-37 and 46-50 (WEQFH). 2 residues coordinate Mg(2+): Glu-62 and Glu-65. Residue Trp-72 participates in substrate binding. At Ser-84 the chain carries Phosphoserine. Residues Glu-94 and Asp-97 each contribute to the Mg(2+) site. Residue Tyr-101 coordinates substrate. Positions 143–169 (LPHGATSENQAMGPADPASESTGQVST) are disordered.

Homotetramer. Mg(2+) is required as a cofactor.

The protein localises to the cytoplasm. It is found in the cytosol. It catalyses the reaction dCTP + H2O = dCMP + diphosphate + H(+). In terms of biological role, hydrolyzes deoxynucleoside triphosphates (dNTPs) to the corresponding nucleoside monophosphates. Has a strong preference for dCTP and its analogs including 5-iodo-dCTP and 5-methyl-dCTP for which it may even have a higher efficiency. May protect DNA or RNA against the incorporation of these genotoxic nucleotide analogs through their catabolism. The protein is dCTP pyrophosphatase 1 of Bos taurus (Bovine).